The chain runs to 205 residues: Proteasome subunit beta type-3 (205 aa).

It belongs to the peptidase T1B family. The 26S proteasome consists of a 20S proteasome core and two 19S regulatory subunits. The 20S proteasome core is composed of 28 subunits that are arranged in four stacked rings, resulting in a barrel-shaped structure. The two end rings are each formed by seven alpha subunits, and the two central rings are each formed by seven beta subunits. The catalytic chamber with the active sites is on the inside of the barrel.

The protein resides in the cytoplasm. Its subcellular location is the nucleus. Its function is as follows. Non-catalytic component of the proteasome, a multicatalytic proteinase complex which is characterized by its ability to cleave peptides with Arg, Phe, Tyr, Leu, and Glu adjacent to the leaving group at neutral or slightly basic pH. The proteasome has an ATP-dependent proteolytic activity. The chain is Proteasome subunit beta type-3 (psmB3) from Dictyostelium discoideum (Social amoeba).